The chain runs to 113 residues: Large ribosomal subunit protein uL22 (113 aa).

It belongs to the universal ribosomal protein uL22 family. As to quaternary structure, part of the 50S ribosomal subunit.

This protein binds specifically to 23S rRNA; its binding is stimulated by other ribosomal proteins, e.g. L4, L17, and L20. It is important during the early stages of 50S assembly. It makes multiple contacts with different domains of the 23S rRNA in the assembled 50S subunit and ribosome. Functionally, the globular domain of the protein is located near the polypeptide exit tunnel on the outside of the subunit, while an extended beta-hairpin is found that lines the wall of the exit tunnel in the center of the 70S ribosome. This is Large ribosomal subunit protein uL22 from Natranaerobius thermophilus (strain ATCC BAA-1301 / DSM 18059 / JW/NM-WN-LF).